We begin with the raw amino-acid sequence, 457 residues long: Succinate-semialdehyde dehydrogenase [NADP(+)] 1 (457 aa).

209 to 214 (GSEPAG) is a binding site for NADP(+). Active-site residues include E231 and C265.

This sequence belongs to the aldehyde dehydrogenase family.

The catalysed reaction is succinate semialdehyde + NAD(+) + H2O = succinate + NADH + 2 H(+). It catalyses the reaction succinate semialdehyde + NADP(+) + H2O = succinate + NADPH + 2 H(+). Functionally, catalyzes the NADP(+)-dependent oxidation of succinate semialdehyde to succinate. It is believed to be the main source of succinate semialdehyde dehydrogenase activity in Mycobacterium. This Mycobacterium bovis (strain ATCC BAA-935 / AF2122/97) protein is Succinate-semialdehyde dehydrogenase [NADP(+)] 1 (gabD1).